The chain runs to 207 residues: Guanylate kinase (207 aa).

Residues 6-185 (GLLIVLSGPS…AKNRIQSIVE (180 aa)) form the Guanylate kinase-like domain. Position 13-20 (13-20 (GPSGVGKG)) interacts with ATP.

This sequence belongs to the guanylate kinase family.

It is found in the cytoplasm. The catalysed reaction is GMP + ATP = GDP + ADP. Its function is as follows. Essential for recycling GMP and indirectly, cGMP. This is Guanylate kinase from Staphylococcus epidermidis (strain ATCC 35984 / DSM 28319 / BCRC 17069 / CCUG 31568 / BM 3577 / RP62A).